The sequence spans 36 residues: Pancreatic polypeptide (36 aa).

Tyrosine 36 carries the tyrosine amide modification.

Belongs to the NPY family.

It localises to the secreted. Hormone secreted by pancreatic cells that acts as a regulator of pancreatic and gastrointestinal functions probably by signaling through the G protein-coupled receptor NPY4R2. This is Pancreatic polypeptide (PPY) from Chinchilla chinchilla (Short-tailed chinchilla).